The sequence spans 198 residues: Patulin synthesis protein F (198 aa).

A signal peptide spans methionine 1–alanine 18. Residues asparagine 128 and asparagine 184 are each glycosylated (N-linked (GlcNAc...) asparagine).

The protein belongs to the patF family.

It localises to the cytoplasm. It is found in the cytosol. The catalysed reaction is phyllostine = neopatulin. The protein operates within mycotoxin biosynthesis; patulin biosynthesis. In terms of biological role, part of the gene cluster that mediates the biosynthesis of patulin, an acetate-derived tetraketide mycotoxin produced by several fungal species that shows antimicrobial properties against several bacteria. PatF catalyzes the conversion of phyllostine into neopatulin. The pathway begins with the synthesis of 6-methylsalicylic acid by the polyketide synthase (PKS) patK via condensation of acetate and malonate units. The 6-methylsalicylic acid decarboxylase patG then catalyzes the decarboxylation of 6-methylsalicylic acid to yield m-cresol (also known as 3-methylphenol). These first reactions occur in the cytosol. The intermediate m-cresol is then transported into the endoplasmic reticulum where the cytochrome P450 monooxygenase patH converts it to m-hydroxybenzyl alcohol, which is further converted to gentisyl alcohol by the cytochrome P450 monooxygenase patI. The oxidoreductases patJ and patO further convert gentisyl alcohol to isoepoxydon in the vacuole. PatN catalyzes then the transformation of isoepoxydon into phyllostine. The cluster protein patF is responsible for the conversion from phyllostine to neopatulin whereas the alcohol dehydrogenase patD converts neopatulin to E-ascladiol. The steps between isoepoxydon and E-ascladiol occur in the cytosol, and E-ascladiol is probably secreted to the extracellular space by one of the cluster-specific transporters patC or patM. Finally, the secreted patulin synthase patE catalyzes the conversion of E-ascladiol to patulin. This chain is Patulin synthesis protein F, found in Aspergillus clavatus (strain ATCC 1007 / CBS 513.65 / DSM 816 / NCTC 3887 / NRRL 1 / QM 1276 / 107).